The sequence spans 331 residues: D-lactate dehydrogenase (331 aa).

NAD(+) is bound by residues 155-156 (HI), Asp-175, 206-207 (VP), Asn-212, 233-235 (AAR), and Asp-259. Arg-235 is a catalytic residue. Residue Glu-264 is part of the active site. The active-site Proton donor is the His-296.

Belongs to the D-isomer specific 2-hydroxyacid dehydrogenase family. In terms of assembly, homodimer.

It catalyses the reaction (R)-lactate + NAD(+) = pyruvate + NADH + H(+). The chain is D-lactate dehydrogenase from Leuconostoc mesenteroides subsp. cremoris.